A 489-amino-acid polypeptide reads, in one-letter code: Netrin-5 (489 aa).

An N-terminal signal peptide occupies residues 1–16 (MPVTFALLLLLGQATA). The N-linked (GlcNAc...) asparagine glycan is linked to N62. 15 disulfides stabilise this stretch: C157–C166, C159–C175, C177–C186, C189–C209, C212–C221, C214–C239, C242–C251, C254–C272, C275–C287, C277–C294, C296–C305, C308–C322, C345–C418, C349–C420, and C364–C475. Laminin EGF-like domains follow at residues 157–211 (CQCH…PCLP), 212–274 (CSCN…ACRA), and 275–324 (CQCH…PCQR). Residues 345–475 (CQNYCNMSDT…LQQEERAGGC (131 aa)) enclose the NTR domain. The segment at 470-489 (ERAGGCRGVRAPTPSPRPEH) is disordered.

It is found in the secreted. Its function is as follows. Plays a role in neurogenesis. Prevents motor neuron cell body migration out of the neural tube. This Homo sapiens (Human) protein is Netrin-5 (NTN5).